Consider the following 135-residue polypeptide: Transcription antitermination protein NusB (135 aa).

Belongs to the NusB family.

Its function is as follows. Involved in transcription antitermination. Required for transcription of ribosomal RNA (rRNA) genes. Binds specifically to the boxA antiterminator sequence of the ribosomal RNA (rrn) operons. This chain is Transcription antitermination protein NusB, found in Shewanella pealeana (strain ATCC 700345 / ANG-SQ1).